Reading from the N-terminus, the 463-residue chain is DDB1- and CUL4-associated factor 12-like protein 1 (463 aa).

The interval methionine 1 to glycine 35 is disordered. WD repeat units lie at residues leucine 87–arginine 137, aspartate 138–proline 184, leucine 185–alanine 252, isoleucine 253–arginine 297, leucine 298–isoleucine 341, and arginine 342–aspartate 376.

Belongs to the WD repeat DCAF12 family.

This chain is DDB1- and CUL4-associated factor 12-like protein 1 (DCAF12L1), found in Homo sapiens (Human).